The following is a 430-amino-acid chain: MKVQLLKIPSHLIVAGSSWLSKIIIAGVQLASISYLISMLGEEKYAIFSLLTGLLVWCSAVDFGIGTGLQNYISECRAKNKSYDAYIKSALHLSFIAIIFFIALFYIFSGVISAKYLSSFHEVLQDKTRMLFFTSCLVFSSIGIGAIAYKILFAELVGWKANLLNALSYMIGMLGLLYIYYRGISVDIKLSLIVLYLPVGMISLCYIVYRYIKLYHVKTTKSHYIAILRRSSGFFLFTLLSIVVLQTDYMVISQRLTPADIVQYTVTMKIFGLVFFIYTAILQALWPICAELRVKQQWKKLNKMIGVNILLGSLYVVGCTIFIYLFKEQIFSVIAKDINYQVSILSFMLIGIYFCIRVWCDTYAMLLQSMNYLKILWILVPLQAIIGGIAQWYFSSTLGISGVLLGLIISFALTVFWGLPLTYLIKANKG.

The next 12 membrane-spanning stretches (helical) occupy residues 23–39, 45–61, 96–112, 131–147, 163–179, 192–208, 236–252, 266–282, 309–325, 342–358, 373–389, and 400–416; these read IIIA…LISM, YAIF…CSAV, IAII…SGVI, LFFT…IGAI, LLNA…LLYI, LIVL…CYIV, LFTL…YMVI, VTMK…TAIL, ILLG…FIYL, VSIL…CIRV, LKIL…IGGI, and ISGV…LTVF.

The protein resides in the cell inner membrane. It participates in bacterial outer membrane biogenesis; LPS O-antigen biosynthesis. Its function is as follows. May be involved in the translocation process of the nascent O-polysaccharide molecules and/or its ligation to lipid A core units. The polypeptide is Putative O-antigen transporter (rfbX) (Salmonella typhimurium (strain LT2 / SGSC1412 / ATCC 700720)).